Here is a 280-residue protein sequence, read N- to C-terminus: Bicarbonate transport system permease protein CmpB (280 aa).

7 consecutive transmembrane segments (helical) span residues 32–52, 99–119, 126–146, 153–173, 198–218, 219–239, and 251–271; these read PIFGILGFLLLWQLISSAGLI, YSLAAIVGISTGILVGTQPLL, IFQFLRMVAPLAWVPIALVAL, AIFVIFITSVWPILINTTEGV, ILIPSALPYIFTGLRIAIGLA, WLAIIAAEIVMSGIVGIGFFI, and IILAVFYIGAVGLLLDRGIAY. One can recognise an ABC transmembrane type-1 domain in the interval 88 to 266; that stretch reads TLASLGRVAQ…YIGAVGLLLD (179 aa).

It belongs to the binding-protein-dependent transport system permease family. As to quaternary structure, the complex is composed of two ATP-binding proteins (CmpC and CmpD), a transmembrane protein (CmpB) and a solute-binding protein (CmpA).

It is found in the cell inner membrane. Functionally, part of the ABC transporter complex CmpABCD involved in bicarbonate transport. Probably responsible for the translocation of the substrate across the membrane. This is Bicarbonate transport system permease protein CmpB (cmpB) from Synechocystis sp. (strain ATCC 27184 / PCC 6803 / Kazusa).